We begin with the raw amino-acid sequence, 122 residues long: Large ribosomal subunit protein uL14 (122 aa).

Belongs to the universal ribosomal protein uL14 family. As to quaternary structure, part of the 50S ribosomal subunit. Forms a cluster with proteins L3 and L19. In the 70S ribosome, L14 and L19 interact and together make contacts with the 16S rRNA in bridges B5 and B8.

Its function is as follows. Binds to 23S rRNA. Forms part of two intersubunit bridges in the 70S ribosome. This is Large ribosomal subunit protein uL14 from Rhodospirillum rubrum (strain ATCC 11170 / ATH 1.1.1 / DSM 467 / LMG 4362 / NCIMB 8255 / S1).